The following is a 637-amino-acid chain: Protein arginine N-methyltransferase 5 (637 aa).

Ala-2 is subject to N-acetylalanine. Residues 13–292 (RVSSGRDLNC…YLEYLSQNRP (280 aa)) are TIM barrel. The SAM-dependent MTase PRMT-type domain occupies 308-615 (LQSPLQPLMD…SNSKKVWYEW (308 aa)). Residue Tyr-324 participates in S-adenosyl-L-methionine binding. Phe-327 contacts a protein. S-adenosyl-L-methionine-binding positions include 333-334 (KY), Glu-392, and 419-420 (DM). A protein is bound by residues Glu-435 and Glu-444. Residues Glu-435 and Glu-444 each act as proton donor/acceptor in the active site. The beta barrel stretch occupies residues 465-637 (PGEYTSFLAP…PTGRSYTIGL (173 aa)). Residues 488-494 (REKDRDP) form a dimerization region.

Belongs to the class I-like SAM-binding methyltransferase superfamily. Protein arginine N-methyltransferase family. In terms of assembly, forms, at least, homodimers and homotetramers. Component of the methylosome complex, composed of PRMT5, WDR77 and CLNS1A. Found in a complex composed of PRMT5, WDR77 and RIOK1. RIOK1 and CLNS1A associate with PRMT5 in a mutually exclusive fashion, which allows the recruitment of distinct methylation substrates, such as nucleolin/NCL and Sm proteins, respectively. Interacts with PRDM1. Identified in a complex composed of methylosome and PRMT1 and ERH. Interacts with EGFR; methylates EGFR and stimulates EGFR-mediated ERK activation. Interacts with HOXA9. Interacts with SRGAP2. Found in a complex with COPRS, RUNX1 and CBFB. Interacts with CHTOP; the interaction symmetrically methylates CHTOP, but seems to require the presence of PRMT1. Interacts with EPB41L3; this modulates methylation of target proteins. Component of a high molecular weight E2F-pocket protein complex, CERC (cyclin E1 repressor complex). Associates with SWI/SNF remodeling complexes containing SMARCA2 and SMARCA4. Interacts with JAK2, SSTR1, SUPT5H, BRAF and with active RAF1. Interacts with LSM11, PRMT7 and SNRPD3. Interacts with COPRS; promoting its recruitment on histone H4. Interacts with CLNS1A/pICln. Identified in a complex with CLNS1A/pICln and Sm proteins. Interacts with RPS10. Interacts with WDR77. Interacts with IWS1. Interacts with CRY1. Interacts with POLR2A. Interacts with SMN1/SMN2. Interacts with LYAR; this interaction is direct. Interacts with TTC5/STRAP; this interaction is DNA damage-dependent and promotes PRMT5 interaction with p53/TP53. Interacts with p53/TP53 in response to DNA damage; the interaction is TTC5/STRAP dependent. Interacts with FAM47E; the interaction is direct, promotes PRMT5 localization to chromatin, and does not disrupt its association with WDR77 or STUB1. Interacts with TDRD6. Interacts with STUB1. Interacts with MBD2. Does not interact with MBD3.

Its subcellular location is the cytoplasm. The protein localises to the nucleus. It localises to the golgi apparatus. The enzyme catalyses L-arginyl-[protein] + 2 S-adenosyl-L-methionine = N(omega),N(omega)'-dimethyl-L-arginyl-[protein] + 2 S-adenosyl-L-homocysteine + 2 H(+). Activity is increased by EGF, HGF, FGF1 or FGF2 treatments, and slightly decreased by NGF treatment. Its function is as follows. Arginine methyltransferase that can both catalyze the formation of omega-N monomethylarginine (MMA) and symmetrical dimethylarginine (sDMA), with a preference for the formation of MMA. Specifically mediates the symmetrical dimethylation of arginine residues in the small nuclear ribonucleoproteins Sm D1 (SNRPD1) and Sm D3 (SNRPD3); such methylation being required for the assembly and biogenesis of snRNP core particles. Methylates SUPT5H and may regulate its transcriptional elongation properties. May methylate the N-terminal region of MBD2. Mono- and dimethylates arginine residues of myelin basic protein (MBP) in vitro. May play a role in cytokine-activated transduction pathways. Negatively regulates cyclin E1 promoter activity and cellular proliferation. Methylates histone H2A and H4 'Arg-3' during germ cell development. Methylates histone H3 'Arg-8', which may repress transcription. Methylates the Piwi proteins (PIWIL1, PIWIL2 and PIWIL4), methylation of Piwi proteins being required for the interaction with Tudor domain-containing proteins and subsequent localization to the meiotic nuage. Methylates RPS10. Attenuates EGF signaling through the MAPK1/MAPK3 pathway acting at 2 levels. First, monomethylates EGFR; this enhances EGFR 'Tyr-1197' phosphorylation and PTPN6 recruitment, eventually leading to reduced SOS1 phosphorylation. Second, methylates RAF1 and probably BRAF, hence destabilizing these 2 signaling proteins and reducing their catalytic activity. Required for induction of E-selectin and VCAM-1, on the endothelial cells surface at sites of inflammation. Methylates HOXA9. Methylates and regulates SRGAP2 which is involved in cell migration and differentiation. Acts as a transcriptional corepressor in CRY1-mediated repression of the core circadian component PER1 by regulating the H4R3 dimethylation at the PER1 promoter. Methylates GM130/GOLGA2, regulating Golgi ribbon formation. Methylates H4R3 in genes involved in glioblastomagenesis in a CHTOP- and/or TET1-dependent manner. Symmetrically methylates POLR2A, a modification that allows the recruitment to POLR2A of proteins including SMN1/SMN2 and SETX. This is required for resolving RNA-DNA hybrids created by RNA polymerase II, that form R-loop in transcription terminal regions, an important step in proper transcription termination. Along with LYAR, binds the promoter of gamma-globin HBG1/HBG2 and represses its expression. Symmetrically methylates NCL. Methylates p53/TP53; methylation might possibly affect p53/TP53 target gene specificity. Involved in spliceosome maturation and mRNA splicing in prophase I spermatocytes through the catalysis of the symmetrical arginine dimethylation of SNRPB (small nuclear ribonucleoprotein-associated protein) and the interaction with tudor domain-containing protein TDRD6. This chain is Protein arginine N-methyltransferase 5 (PRMT5), found in Macaca fascicularis (Crab-eating macaque).